Reading from the N-terminus, the 938-residue chain is Kexin (938 aa).

The N-terminal stretch at 1 to 20 (MLPIKLLIFILGYLLSPTLQ) is a signal peptide. Residues N41 and N193 are each glycosylated (N-linked (GlcNAc...) asparagine). The Peptidase S8 domain maps to 179 to 489 (QWHLINLKYP…YGKTDAYKMV (311 aa)). Residues D213 and H251 each act as charge relay system in the active site. 2 cysteine pairs are disulfide-bonded: C267–C414 and C359–C389. The active-site Charge relay system is the S422. Residues N441, N512, N539, and N599 are each glycosylated (N-linked (GlcNAc...) asparagine). The 150-residue stretch at 498-647 (VKPQAWYYSD…QFRIFGESID (150 aa)) folds into the P/Homo B domain. Positions 671 to 768 (EKQNSKSTTT…DNDNDNGNKK (98 aa)) are disordered. The segment covering 677–691 (STTTTSSTTTATTTS) has biased composition (low complexity). A compositionally biased stretch (polar residues) spans 711-735 (KVDNSASITTSQTASLTSSNEQHQP). Over residues 740 to 762 (SDSDSDTDDENKQEGEEDNDNDN) the composition is skewed to acidic residues. Residues 775–795 (GFYLMSIAVVGFIAVLLVMKF) traverse the membrane as a helical segment. The Cytoplasmic portion of the chain corresponds to 796 to 924 (HKTPGSGRRR…SGTSTKKYKD (129 aa)). Positions 798–808 (TPGSGRRRRRR) are enriched in basic residues. A disordered region spans residues 798-938 (TPGSGRRRRR…EDHKDVVGTQ (141 aa)). A compositionally biased stretch (acidic residues) spans 820-831 (DYSDSDDDEDDF). Residues 832–849 (DTRRADDDSFDLGHRNDQ) are compositionally biased toward basic and acidic residues. Low complexity predominate over residues 850–859 (RVVSASQQQR). A compositionally biased stretch (basic and acidic residues) spans 860-874 (QYDRQQDETRDRLFD). Positions 902–919 (QQSAKAPSNSEGNSGTST) are enriched in polar residues. The span at 921–938 (KYKDNEADEDHKDVVGTQ) shows a compositional bias: basic and acidic residues.

The protein belongs to the peptidase S8 family. Furin subfamily. Requires Ca(2+) as cofactor. Post-translationally, O-glycosylated.

The protein resides in the golgi apparatus. Its subcellular location is the trans-Golgi network membrane. The catalysed reaction is Cleavage of -Lys-Arg-|-Xaa- and -Arg-Arg-|-Xaa- bonds to process yeast alpha-factor pheromone and killer toxin precursors.. The protein is Kexin (KEX2) of Candida albicans (strain WO-1) (Yeast).